A 117-amino-acid chain; its full sequence is NADH-ubiquinone oxidoreductase chain 3 (117 aa).

Helical transmembrane passes span 2-22, 56-76, and 85-105; these read ILYV…IYLL, FFIL…LFPV, and SPLI…GLLY.

This sequence belongs to the complex I subunit 3 family.

It localises to the mitochondrion membrane. It carries out the reaction a ubiquinone + NADH + 5 H(+)(in) = a ubiquinol + NAD(+) + 4 H(+)(out). Its function is as follows. Core subunit of the mitochondrial membrane respiratory chain NADH dehydrogenase (Complex I) that is believed to belong to the minimal assembly required for catalysis. Complex I functions in the transfer of electrons from NADH to the respiratory chain. The immediate electron acceptor for the enzyme is believed to be ubiquinone. The sequence is that of NADH-ubiquinone oxidoreductase chain 3 (ND3) from Albinaria caerulea (Land snail).